The primary structure comprises 857 residues: Protein argonaute-1 (857 aa).

The PAZ domain occupies 227–346; sequence PVIEFMCEVL…LPLEVCNIVA (120 aa). Interaction with guide RNA stretches follow at residues 309-314 and 522-564; these read YFKQKY and GKTP…LCLK. The 302-residue stretch at 515 to 816 folds into the Piwi domain; that stretch reads LIIVILPGKT…VAFRARYHLV (302 aa). The impairs access of bound RNA to the active site stretch occupies residues 670–675; the sequence is PEGQLP. Interaction with guide RNA regions lie at residues 708 to 712, 751 to 759, and 788 to 813; these read RHHTR, HAGIQGTSR, and YVRC…RARY.

The protein belongs to the argonaute family. Ago subfamily. In terms of assembly, interacts with DDB1, DDX5, DDX6, DHX30, DHX36, DDX47, DICER1, AGO2, ELAVL1, HNRNPF, IGF2BP1, ILF3, IMP8, MATR3, MOV10, PABPC1, PRMT5, RBM4, SART3, TNRC6B, UPF1 and YBX1. Associates with polysomes and messenger ribonucleoproteins (mNRPs). Interacts with LIMD1, WTIP and AJUBA. Interacts with APOBEC3F, APOBEC3G and APOBEC3H. Post-translationally, ubiquitinated on surface-exposed lysines by a SCF-like E3 ubiquitin-protein ligase complex containing ZSWIM8 during target-directed microRNA degradation (TDMD), a process that mediates degradation of microRNAs (miRNAs). Ubiquitination by the SCF-like E3 ubiquitin-protein ligase complex containing ZSWIM8 leads to its subsequent degradation, thereby exposing miRNAs for degradation. ZSWIM8 recognizes and binds AGO1 when it is engaged with a TDMD target.

Its subcellular location is the cytoplasm. It is found in the P-body. Its function is as follows. Required for RNA-mediated gene silencing (RNAi). Binds to short RNAs such as microRNAs (miRNAs) or short interfering RNAs (siRNAs), and represses the translation of mRNAs which are complementary to them. Lacks endonuclease activity and does not appear to cleave target mRNAs. Also required for transcriptional gene silencing (TGS) of promoter regions which are complementary to bound short antigene RNAs (agRNAs). This chain is Protein argonaute-1 (AGO1), found in Homo sapiens (Human).